The sequence spans 98 residues: Cytochrome c oxidase assembly protein COX19 (98 aa).

The segment covering 1–10 has biased composition (polar residues); that stretch reads MSGNPGSSLS. A disordered region spans residues 1–25; the sequence is MSGNPGSSLSALRPTPPERGSFPLD. Residues 27–70 enclose the CHCH domain; it reads DGECTKYMQEYLKCMQLVQNENAMNCRLLAKDYLRCRMDHQLMD. 2 short sequence motifs (cx9C motif) span residues 30 to 40 and 52 to 62; these read CTKYMQEYLKC and CRLLAKDYLRC. Disulfide bonds link Cys-30–Cys-62 and Cys-40–Cys-52. The tract at residues 76 to 98 is disordered; the sequence is HLGLPEDAPGNNGKTIKDATDNK.

Belongs to the COX19 family.

The protein resides in the cytoplasm. The protein localises to the mitochondrion intermembrane space. Required for the assembly of mitochondrial cytochrome c oxidase. This chain is Cytochrome c oxidase assembly protein COX19 (COX19), found in Saccharomyces cerevisiae (strain ATCC 204508 / S288c) (Baker's yeast).